The chain runs to 717 residues: Protein Teyrha-meyrha (717 aa).

Residues 140 to 152 (FRTDSASPTCTSH) show a composition bias toward polar residues. Disordered stretches follow at residues 140-214 (FRTD…SNPA), 229-270 (HLAA…APPV), 440-498 (KIPP…QPGK), 511-539 (SQKD…GEAP), 563-594 (DSCG…MDTA), and 624-717 (QRRQ…DTKA). Over residues 195 to 214 (ATSSSASSSSSSSCSTSNPA) the composition is skewed to low complexity. A compositionally biased stretch (basic residues) spans 235–263 (PHHHPHTHAHSHPHPLAHPHAHSHHHVGH). A compositionally biased stretch (basic and acidic residues) spans 442 to 451 (PPEDDAKSQE). Acidic residues predominate over residues 452 to 466 (EIETVDVESCNDEVP). Over residues 471–482 (ELATPSSGSSGT) the composition is skewed to polar residues. Basic and acidic residues predominate over residues 513-522 (KDPHPDEHDV). Composition is skewed to low complexity over residues 523–533 (STNVTTASSSS) and 570–580 (NDTNSSSSTHN). Residues 630-640 (QNVGSSRSLEN) are compositionally biased toward polar residues. A compositionally biased stretch (low complexity) spans 667 to 686 (NNNNNNNNNNNNSNSNNNNN). The span at 687–704 (PSTKYAESMENSLSQLSS) shows a compositional bias: polar residues.

As to expression, in embryos, expressed specifically in M12 (at protein level).

The protein resides in the nucleus. Required for the correct synaptic targeting of motoneurons RP5 and V to muscle 12 (M12). May be involved in the negative regulation of Tl in M12. Involved in the correct patterning of veins in the proximal (costal) region of the wing blade. This chain is Protein Teyrha-meyrha, found in Drosophila melanogaster (Fruit fly).